The chain runs to 91 residues: Non-specific lipid-transfer protein 1 (91 aa).

Intrachain disulfides connect Cys3–Cys50, Cys13–Cys27, Cys28–Cys73, and Cys48–Cys87.

The protein belongs to the plant LTP family.

Functionally, plant non-specific lipid-transfer proteins transfer phospholipids as well as galactolipids across membranes. May play a role in wax or cutin deposition in the cell walls of expanding epidermal cells and certain secretory tissues. The sequence is that of Non-specific lipid-transfer protein 1 from Prunus domestica (Garden plum).